The primary structure comprises 193 residues: Ancillary SecYEG translocon subunit (193 aa).

At 1–8 (MLNISKKN) the chain is on the cytoplasmic side. A helical membrane pass occupies residues 9 to 29 (IIFFILFFLIISLILFNWKYF). The Periplasmic segment spans residues 30-193 (SLVNKENLES…MKLNELKEQN (164 aa)).

The protein belongs to the YfgM family. As to quaternary structure, interacts with the SecYEG translocon. Forms a complex with PpiD.

Its subcellular location is the cell inner membrane. Its function is as follows. May mediate protein transfer from the SecYEG translocon to the periplasmic chaperone network via its periplasmic C-terminal region. The chain is Ancillary SecYEG translocon subunit from Buchnera aphidicola subsp. Acyrthosiphon pisum (strain APS) (Acyrthosiphon pisum symbiotic bacterium).